The following is a 291-amino-acid chain: Urease accessory protein UreD (291 aa).

This sequence belongs to the UreD family. UreD, UreF and UreG form a complex that acts as a GTP-hydrolysis-dependent molecular chaperone, activating the urease apoprotein by helping to assemble the nickel containing metallocenter of UreC. The UreE protein probably delivers the nickel.

The protein localises to the cytoplasm. Its function is as follows. Required for maturation of urease via the functional incorporation of the urease nickel metallocenter. This chain is Urease accessory protein UreD, found in Acinetobacter baumannii (strain SDF).